A 492-amino-acid polypeptide reads, in one-letter code: Glutamyl-tRNA(Gln) amidotransferase subunit A (492 aa).

Catalysis depends on charge relay system residues K78 and S158. Residue S182 is the Acyl-ester intermediate of the active site.

Belongs to the amidase family. GatA subfamily. Heterotrimer of A, B and C subunits.

It catalyses the reaction L-glutamyl-tRNA(Gln) + L-glutamine + ATP + H2O = L-glutaminyl-tRNA(Gln) + L-glutamate + ADP + phosphate + H(+). Allows the formation of correctly charged Gln-tRNA(Gln) through the transamidation of misacylated Glu-tRNA(Gln) in organisms which lack glutaminyl-tRNA synthetase. The reaction takes place in the presence of glutamine and ATP through an activated gamma-phospho-Glu-tRNA(Gln). The sequence is that of Glutamyl-tRNA(Gln) amidotransferase subunit A from Rhodopseudomonas palustris (strain BisA53).